Reading from the N-terminus, the 349-residue chain is Protein RecA (349 aa).

G65–T72 contributes to the ATP binding site.

This sequence belongs to the RecA family.

It localises to the cytoplasm. Can catalyze the hydrolysis of ATP in the presence of single-stranded DNA, the ATP-dependent uptake of single-stranded DNA by duplex DNA, and the ATP-dependent hybridization of homologous single-stranded DNAs. It interacts with LexA causing its activation and leading to its autocatalytic cleavage. This Vibrio vulnificus (strain CMCP6) protein is Protein RecA.